The primary structure comprises 634 residues: Carbon monoxide dehydrogenase 2 (634 aa).

Residues Cys44, Cys53, Cys56, Cys61, and Cys73 each contribute to the [4Fe-4S] cluster site. [Ni-4Fe-5S] cluster contacts are provided by His264, Cys343, Cys453, Cys484, and Cys525.

It belongs to the Ni-containing carbon monoxide dehydrogenase family. In terms of assembly, homodimer. It depends on [4Fe-4S] cluster as a cofactor. [Ni-4Fe-5S] cluster serves as cofactor.

It catalyses the reaction CO + 2 oxidized [2Fe-2S]-[ferredoxin] + H2O = 2 reduced [2Fe-2S]-[ferredoxin] + CO2 + 2 H(+). In terms of biological role, CODH oxidizes carbon monoxide coupled, via CooF, to the reduction of a hydrogen cation by a hydrogenase (possibly CooH). This chain is Carbon monoxide dehydrogenase 2 (cooS2), found in Methanosarcina mazei (strain ATCC BAA-159 / DSM 3647 / Goe1 / Go1 / JCM 11833 / OCM 88) (Methanosarcina frisia).